Consider the following 435-residue polypeptide: FAD-dependent monooxygenase ATEG_07662 (435 aa).

Residues 8 to 28 (PLDVAIIGGGIIGIMTALGLL) traverse the membrane as a helical segment. The FAD site is built by glutamate 38, alanine 51, and arginine 119. A glycan (N-linked (GlcNAc...) asparagine) is linked at asparagine 191. Residue arginine 201 is part of the active site. FAD contacts are provided by aspartate 317 and alanine 330.

This sequence belongs to the paxM FAD-dependent monooxygenase family. The cofactor is FAD.

The protein localises to the membrane. The protein operates within secondary metabolite biosynthesis. Its function is as follows. FAD-dependent monooxygenase; part of the cluster B that mediates the biosynthesis of azasperpyranones, members of the azaphilone family that exhibit anti-cancer activities. Azasperpyranones are synthesized by 2 clusters, A and B. Cluster A is responsible for the production of the polyhydric phenol moiety while the azaphilonoid scaffold is produced by the cluster B. The non-reducing polyketide synthase ATEG_03629 produces 5-methyl orsellinic acid, which is then reduced to 5-methyl orsellinic aldehyde by the NRPS-like protein ATEG_03630. 5-methyl orsellinic aldehyde is then first hydroxylated by the FAD-dependent monooxygenase ATEG_03635 and subsequently hydroxylated by the cytochrome P450 monooxygenase ATEG_03631 to produce the unstable polyhydric phenol precursor of azasperpyranones. On the other hand, the polyketide synthase ATEG_07659 is responsible for producing the 3,5-dimethyloctadienone moiety from acetyl-CoA, three malonyl-CoA, and two S-adenosyl methionines (SAM). The 3,5-dimethyloctadienone moiety is then loaded onto the SAT domain of ATEG_07661 and extended with four malonyl-CoA and one SAM, which leads to the formation of 2,4-dihydroxy-6-(5,7-dimethyl-2-oxo-trans-3-trans-5-nonadienyl)-3-methylbenzaldehyde (compound 8) after reductive release and aldol condensation. The FAD-dependent monooxygenase ATEG_07662 is the next enzyme in the biosynthesis sequence and hydroxylates the side chain at the benzylic position of compound 8. In Aspergillus nidulans, afoF, the ortholog of the FAD-dependent oxygenase ATEG_07660, is the key enzyme for the biosynthesis of asperfuranone by catalyzing the hydroxylation at C-8 of to prevent the formation of a six-membered ring hemiacetal intermediate and thus facilitating the formation of a five-membered ring to produce asperfuranone. In Aspergillus terreus, ATEG_07660 is probably not functional, which leads to the formation of the six-membered ring hemiacetal intermediate presperpyranone instead of asperfuranone. Finally, ATEG_03636 is involved in the condensation of the polyhydric phenol moiety produced by cluster A and the perasperpyranone precursor produced by cluster B, to yield azasperpyranone A. Further modifications of azasperpyranone A result in the production of derivatives, including azasperpyranone B to F. The protein is FAD-dependent monooxygenase ATEG_07662 of Aspergillus terreus (strain NIH 2624 / FGSC A1156).